Reading from the N-terminus, the 763-residue chain is Hormone-sensitive lipase (763 aa).

Residues 350–352 (HGG) carry the Involved in the stabilization of the negatively charged intermediate by the formation of the oxyanion hole motif. Ser424 is an active-site residue. Ser552 is subject to Phosphoserine. Residue Ser554 is modified to Phosphoserine; by AMPK. Residues Ser595, Ser627, and Ser649 each carry the phosphoserine modification. Residues 616–627 (AREEAEAKEGLS) are compositionally biased toward basic and acidic residues. Residues 616-652 (AREEAEAKEGLSAKDGSSRVSNAFPEGFHPRRTSQGA) are disordered. Active-site residues include Asp692 and His722.

Belongs to the 'GDXG' lipolytic enzyme family. As to quaternary structure, monomer and homodimer. Interacts with CAVIN1 in the adipocyte cytoplasm. Interacts with PLIN5. Post-translationally, phosphorylation by AMPK reduces its translocation towards the lipid droplets.

It is found in the cell membrane. The protein resides in the membrane. Its subcellular location is the caveola. The protein localises to the cytoplasm. It localises to the cytosol. It is found in the lipid droplet. It catalyses the reaction a diacylglycerol + H2O = a monoacylglycerol + a fatty acid + H(+). The enzyme catalyses a triacylglycerol + H2O = a diacylglycerol + a fatty acid + H(+). It carries out the reaction a monoacylglycerol + H2O = glycerol + a fatty acid + H(+). The catalysed reaction is Hydrolyzes glycerol monoesters of long-chain fatty acids.. It catalyses the reaction 1,2-di-(9Z-octadecenoyl)-glycerol + (9Z)-octadecenoate + H(+) = 1,2,3-tri-(9Z-octadecenoyl)-glycerol + H2O. The enzyme catalyses 2,3-di-(9Z)-octadecenoyl-sn-glycerol + H2O = 2-(9Z-octadecenoyl)-glycerol + (9Z)-octadecenoate + H(+). It carries out the reaction cholesteryl (9Z-octadecenoate) + H2O = cholesterol + (9Z)-octadecenoate + H(+). The catalysed reaction is 1,2,3-tri-(9Z-octadecenoyl)-glycerol + H2O = di-(9Z)-octadecenoylglycerol + (9Z)-octadecenoate + H(+). It catalyses the reaction all-trans-retinyl hexadecanoate + H2O = all-trans-retinol + hexadecanoate + H(+). The enzyme catalyses 1,2-di-(9Z-octadecenoyl)-glycerol + H2O = (9Z-octadecenoyl)-glycerol + (9Z)-octadecenoate + H(+). It carries out the reaction 2-(5Z,8Z,11Z,14Z-eicosatetraenoyl)-glycerol + H2O = glycerol + (5Z,8Z,11Z,14Z)-eicosatetraenoate + H(+). The catalysed reaction is 1-(9Z-octadecenoyl)-glycerol + H2O = glycerol + (9Z)-octadecenoate + H(+). It catalyses the reaction 2-(9Z-octadecenoyl)-glycerol + H2O = glycerol + (9Z)-octadecenoate + H(+). The enzyme catalyses 1-O-hexadecyl-2-acetyl-sn-glycerol + H2O = 1-O-hexadecyl-sn-glycerol + acetate + H(+). It carries out the reaction 1,2-di-(9Z-octadecenoyl)-sn-glycerol + H2O = (9Z-octadecenoyl)-glycerol + (9Z)-octadecenoate + H(+). The catalysed reaction is 1,3-di-(9Z-octadecenoyl)-glycerol + H2O = 1-(9Z-octadecenoyl)-glycerol + (9Z)-octadecenoate + H(+). It catalyses the reaction 1,2-di-(9Z-octadecenoyl)-glycerol + H2O = 2-(9Z-octadecenoyl)-glycerol + (9Z)-octadecenoate + H(+). It participates in glycerolipid metabolism; triacylglycerol degradation. Its function is as follows. Lipase with broad substrate specificity, catalyzing the hydrolysis of triacylglycerols (TAGs), diacylglycerols (DAGs), monoacylglycerols (MAGs), cholesteryl esters and retinyl esters. Shows a preferential hydrolysis of DAGs over TAGs and MAGs. Preferentially hydrolyzes fatty acid (FA) esters at the sn-3 position of the glycerol backbone in DAGs and FA esters at the sn-1 and sn-2 positions of the glycerol backbone in TAGs. Catalyzes the hydrolysis of 2-arachidonoylglycerol, an endocannabinoid and of 2-acetyl monoalkylglycerol ether, the penultimate precursor of the pathway for de novo synthesis of platelet-activating factor. In adipose tissue and heart, it primarily hydrolyzes stored triglycerides to free fatty acids, while in steroidogenic tissues, it principally converts cholesteryl esters to free cholesterol for steroid hormone production. The sequence is that of Hormone-sensitive lipase (LIPE) from Ictidomys tridecemlineatus (Thirteen-lined ground squirrel).